Reading from the N-terminus, the 306-residue chain is Acetaldehyde dehydrogenase 2/3 (306 aa).

The Acyl-thioester intermediate role is filled by cysteine 130. NAD(+) is bound by residues 161 to 169 and asparagine 272; that span reads SAGPGTRKN.

This sequence belongs to the acetaldehyde dehydrogenase family.

The enzyme catalyses acetaldehyde + NAD(+) + CoA = acetyl-CoA + NADH + H(+). The chain is Acetaldehyde dehydrogenase 2/3 (mhpF) from Azoarcus sp. (strain BH72).